The chain runs to 86 residues: UPF0367 protein PMN2A_1492 (86 aa).

This sequence belongs to the UPF0367 family.

The protein is UPF0367 protein PMN2A_1492 of Prochlorococcus marinus (strain NATL2A).